A 457-amino-acid polypeptide reads, in one-letter code: NADH-quinone oxidoreductase subunit N (457 aa).

The next 14 membrane-spanning stretches (helical) occupy residues 2 to 22 (NAII…FIGL), 25 to 45 (LIYP…ACTF), 60 to 80 (NYSV…FILF), 92 to 112 (GDHY…VSFS), 114 to 134 (MSML…LAGS), 149 to 169 (FILG…IYGA), 188 to 208 (FFIG…AVPF), 222 to 242 (FITA…FYLM), 253 to 273 (YLSH…NIAA), 283 to 303 (LAFS…ILTI), 310 to 330 (FVYL…VQVV), 353 to 373 (AFVL…AGFF), 382 to 402 (VIHA…LISV), and 431 to 451 (VILA…DILL).

Belongs to the complex I subunit 2 family. In terms of assembly, NDH-1 is composed of 14 different subunits. Subunits NuoA, H, J, K, L, M, N constitute the membrane sector of the complex.

Its subcellular location is the cell inner membrane. It catalyses the reaction a quinone + NADH + 5 H(+)(in) = a quinol + NAD(+) + 4 H(+)(out). Its function is as follows. NDH-1 shuttles electrons from NADH, via FMN and iron-sulfur (Fe-S) centers, to quinones in the respiratory chain. The immediate electron acceptor for the enzyme in this species is believed to be a menaquinone. Couples the redox reaction to proton translocation (for every two electrons transferred, four hydrogen ions are translocated across the cytoplasmic membrane), and thus conserves the redox energy in a proton gradient. In Cytophaga hutchinsonii (strain ATCC 33406 / DSM 1761 / CIP 103989 / NBRC 15051 / NCIMB 9469 / D465), this protein is NADH-quinone oxidoreductase subunit N.